Reading from the N-terminus, the 199-residue chain is UPF0301 protein Anae109_0457 (199 aa).

This sequence belongs to the UPF0301 (AlgH) family.

This is UPF0301 protein Anae109_0457 from Anaeromyxobacter sp. (strain Fw109-5).